A 436-amino-acid chain; its full sequence is Adenylosuccinate synthetase (436 aa).

GTP-binding positions include 13-19 and 41-43; these read GDEGKGK and GHT. The active-site Proton acceptor is aspartate 14. Aspartate 14 and glycine 41 together coordinate Mg(2+). IMP-binding positions include 14–17, 39–42, threonine 130, arginine 144, glutamine 225, threonine 240, and arginine 304; these read DEGK and NAGH. The active-site Proton donor is histidine 42. 300–306 serves as a coordination point for substrate; that stretch reads ATTGRSR. Residues arginine 306, 332–334, and 415–417 each bind GTP; these read KLD and STG.

It belongs to the adenylosuccinate synthetase family. Homodimer. The cofactor is Mg(2+).

Its subcellular location is the cytoplasm. The enzyme catalyses IMP + L-aspartate + GTP = N(6)-(1,2-dicarboxyethyl)-AMP + GDP + phosphate + 2 H(+). It participates in purine metabolism; AMP biosynthesis via de novo pathway; AMP from IMP: step 1/2. Functionally, plays an important role in the de novo pathway of purine nucleotide biosynthesis. Catalyzes the first committed step in the biosynthesis of AMP from IMP. This Hamiltonella defensa subsp. Acyrthosiphon pisum (strain 5AT) protein is Adenylosuccinate synthetase.